Here is a 343-residue protein sequence, read N- to C-terminus: Transmembrane protein 120A (343 aa).

Residues Met-1–Glu-132 are Cytoplasmic-facing. Lys-130 is a CoA binding site. A helical membrane pass occupies residues Tyr-133–Arg-152. The Extracellular portion of the chain corresponds to Phe-153–Arg-158. Residues Val-159–Ile-177 form a helical membrane-spanning segment. Residues Arg-178–Lys-190 are Cytoplasmic-facing. CoA contacts are provided by Ser-187 and Arg-188. A helical transmembrane segment spans residues Gly-191–Thr-209. The Extracellular segment spans residues Trp-210–Lys-218. A helical membrane pass occupies residues Phe-219–Tyr-240. 4 residues coordinate CoA: Gln-237, Tyr-240, Gln-241, and His-283. Over Gln-241 to Arg-270 the chain is Cytoplasmic. Residues Gly-271–Phe-294 traverse the membrane as a helical segment. Topologically, residues Asn-295–Glu-304 are extracellular. The chain crosses the membrane as a helical span at residues Trp-305–His-330. Topologically, residues His-331–Asp-343 are cytoplasmic. Lys-332 lines the CoA pocket.

It belongs to the TMEM120 family. As to quaternary structure, homodimer. Forms heterooligomer with TMEM120B. Interacts with PKD2; TMEM120A inhibits PKD2 channel activity through the physical association of PKD2 with TMEM120A. Interacts (via C-terminal domain) with STING1; regulates the trafficking of STING1 from the ER to the ER-Golgi intermediate compartment to elicit antiviral effects. As to expression, expressed in nociceptors.

It is found in the cell membrane. Its subcellular location is the nucleus inner membrane. It localises to the endoplasmic reticulum. In terms of biological role, multifunctional protein involved in mechanosensation, and plays an essential role in lipid metabolism and adipocyte differentiation. May function as a potential ion channel involved in sensing mechanical stimuli. Mediates the mechanosensitivity of the PKD2-TMEM120A channel complex through direct physical interaction. TMEM120A seems to affect mechanosensation by inhibiting PIEZO2 channels, possibly by altering cellular lipid content. TMEM120A is structurally similar to a lipid-modifying enzyme, ELOVL7, and contains a bound coenzyme A molecule, which suggests it might function as an enzyme in lipid metabolism. Additionnaly, implicated in innate immune response against Zika virus. Acts as a key activator of the antiviral signaling involving STING1. The polypeptide is Transmembrane protein 120A (Homo sapiens (Human)).